The following is a 105-amino-acid chain: Protein U4 (105 aa).

A helical transmembrane segment spans residues 5-25 (FLLFLLLLVLVINPSLVVNMV).

It belongs to the nanovirus U4 protein family.

The protein resides in the membrane. In Faba bean necrotic yellows virus (isolate Egyptian EV1-93) (FBNYV), this protein is Protein U4 (DNA-U4).